We begin with the raw amino-acid sequence, 105 residues long: Circadian clock oscillator protein KaiB1 (105 aa).

Belongs to the KaiB family. Homotetramer in solution and crystals formed by 2 dimers. Only elutes as a homotetramer in size exclusion chromatography, interacts with KaiC1 and KaiC3. The KaiABC complex composition changes during the circadian cycle to control KaiC phosphorylation. Complexes KaiC(6), KaiA(2-4):KaiC(6), KaiB(6):KaiC(6) and KaiC(6):KaiB(6):KaiA(12) are among the most important forms, many form cooperatively. Undergoes a major conformational rearrangment; in the free state forms homotetramers as a dimer of dimers. When bound to the CI domain of KaiC switches to a monomeric thioredoxin-fold (KaiB(fs)). KaiB(fs) binds CikA, leading it to dephosphorylate phospho-RpaA.

Key component of the KaiABC oscillator complex, which constitutes the main circadian regulator in cyanobacteria. Complex composition changes during the circadian cycle to control KaiC phosphorylation. KaiA stimulates KaiC autophosphorylation, while KaiB sequesters KaiA, leading to KaiC autodephosphorylation. Phospho-Ser-431 KaiC accumulation triggers binding of KaiB to form the KaiB(6):KaiC(6) complex, leading to changes in output regulators CikA and SasA. KaiB switches to a thioredoxin-like fold (KaiB(fs)) when bound to KaiC. KaiB(6):KaiC(6) formation exposes a site for KaiA binding that sequesters KaiA from KaiC, making the KaiC(6):KaiB(6):KaiA(12) complex that results in KaiC autodephosphorylation. Its function is as follows. Component of the oscillator and circadian clock in this organism, enhances fitness in a rhythmic environment. The homotetramer reduces the ATPase activity of KaiC3 by 35%. Functionally, a metamorphic protein which reversibly switches between an inactive tetrameric fold and a rare, thioredoxin-like monomeric fold (KaiB(fs)). KaiB(fs) binds phospho-KaiC, KaiA and CikA. KaiA and CikA compete for binding to KaiB(fs), and KaiB(fs) and SasA compete for binding to KaiC, thus the clock oscillator and output signal pathway are tightly coupled. The protein is Circadian clock oscillator protein KaiB1 of Synechocystis sp. (strain ATCC 27184 / PCC 6803 / Kazusa).